Here is a 183-residue protein sequence, read N- to C-terminus: Adenine phosphoribosyltransferase (183 aa).

It belongs to the purine/pyrimidine phosphoribosyltransferase family. Homodimer.

It is found in the cytoplasm. It catalyses the reaction AMP + diphosphate = 5-phospho-alpha-D-ribose 1-diphosphate + adenine. The protein operates within purine metabolism; AMP biosynthesis via salvage pathway; AMP from adenine: step 1/1. Functionally, catalyzes a salvage reaction resulting in the formation of AMP, that is energically less costly than de novo synthesis. The protein is Adenine phosphoribosyltransferase of Escherichia coli O157:H7.